Here is a 363-residue protein sequence, read N- to C-terminus: Peptide chain release factor 1 (363 aa).

N5-methylglutamine is present on Gln237. Residues 284–296 (EDEKRRSAEESTR) are compositionally biased toward basic and acidic residues. Residues 284–306 (EDEKRRSAEESTRRSLVASGDRS) are disordered.

It belongs to the prokaryotic/mitochondrial release factor family. Methylated by PrmC. Methylation increases the termination efficiency of RF1.

Its subcellular location is the cytoplasm. Peptide chain release factor 1 directs the termination of translation in response to the peptide chain termination codons UAG and UAA. In Shewanella putrefaciens (strain CN-32 / ATCC BAA-453), this protein is Peptide chain release factor 1.